Consider the following 337-residue polypeptide: Inositol 2-dehydrogenase (337 aa).

The protein belongs to the Gfo/Idh/MocA family. As to quaternary structure, homotetramer.

The enzyme catalyses myo-inositol + NAD(+) = scyllo-inosose + NADH + H(+). In terms of biological role, involved in the oxidation of myo-inositol (MI) to 2-keto-myo-inositol (2KMI or 2-inosose). This is Inositol 2-dehydrogenase from Klebsiella pneumoniae subsp. pneumoniae (strain ATCC 700721 / MGH 78578).